The following is a 1047-amino-acid chain: FACT complex subunit SPT16 (1047 aa).

Alanine 2 is subject to N-acetylalanine. N6-acetyllysine is present on lysine 139. The residue at position 188 (serine 188) is a Phosphoserine. N6-acetyllysine is present on residues lysine 196 and lysine 223. Residues 432–507 (LKNEDEEEEE…GEQQIQKARK (76 aa)) adopt a coiled-coil conformation. Serine 455 carries the phosphoserine modification. Positions 492–518 (RLTEQKGEQQIQKARKSNVSYKNPSLM) are disordered. Residue lysine 497 forms a Glycyl lysine isopeptide (Lys-Gly) (interchain with G-Cter in SUMO2) linkage. A compositionally biased stretch (polar residues) spans 499–514 (EQQIQKARKSNVSYKN). Serine 508 is subject to Phosphoserine. N6-acetyllysine; alternate is present on lysine 513. Lysine 513 participates in a covalent cross-link: Glycyl lysine isopeptide (Lys-Gly) (interchain with G-Cter in SUMO2); alternate. Lysine 647 is covalently cross-linked (Glycyl lysine isopeptide (Lys-Gly) (interchain with G-Cter in SUMO2)). Serine 650 and serine 658 each carry phosphoserine. Residues lysine 732 and lysine 786 each carry the N6-acetyllysine modification. Threonine 903 is modified (phosphothreonine). The residue at position 904 (lysine 904) is an N6-acetyllysine. The disordered stretch occupies residues 918–1047 (EQGGWSFLEP…SSAPPKKKRK (130 aa)). Over residues 927-973 (PEGEGSDAEEGDSESEIEDETFNPSEDDYEEEEEDSDEDYSSEAEES) the composition is skewed to acidic residues. Phosphoserine is present on residues serine 979, serine 982, serine 986, and serine 1015. Basic and acidic residues predominate over residues 985–1005 (ESGKDWDELEEEARKADRESR). A compositionally biased stretch (low complexity) spans 1024–1039 (VHSSGRGSNRGSRHSS).

Belongs to the peptidase M24 family. SPT16 subfamily. Interacts with MYOG (via C-terminal region). Component of the FACT complex, a stable heterodimer of SSRP1 and SUPT16H. Also a component of a CK2-SPT16-SSRP1 complex which forms following UV irradiation, composed of SSRP1, SUPT16H, CSNK2A1, CSNK2A2 and CSNK2B. Interacts with NEK9. Binds to histone H2A-H2B. Identified in a centromere complex containing histones H2A, H2B and H4, and at least CENPA, CENPB, CENPC, CENPT, CENPN, HJURP, SUPT16H, SSRP1 and RSF1. Interacts with GTF2E2. As to quaternary structure, (Microbial infection) Interacts with Herpes simplex virus 1 (HHV-1) protein ICP22; this interaction relocalizes the FACT complex to viral genomes in infected cells. In terms of processing, ADP-ribosylated. ADP-ribosylation by PARP1 is induced by genotoxic stress and correlates with dissociation of FACT from chromatin. In terms of tissue distribution, ubiquitous.

The protein localises to the nucleus. It localises to the chromosome. Its function is as follows. Component of the FACT complex, a general chromatin factor that acts to reorganize nucleosomes. The FACT complex is involved in multiple processes that require DNA as a template such as mRNA elongation, DNA replication and DNA repair. During transcription elongation the FACT complex acts as a histone chaperone that both destabilizes and restores nucleosomal structure. It facilitates the passage of RNA polymerase II and transcription by promoting the dissociation of one histone H2A-H2B dimer from the nucleosome, then subsequently promotes the reestablishment of the nucleosome following the passage of RNA polymerase II. The FACT complex is probably also involved in phosphorylation of 'Ser-392' of p53/TP53 via its association with CK2 (casein kinase II). The polypeptide is FACT complex subunit SPT16 (SUPT16H) (Homo sapiens (Human)).